The following is an 862-amino-acid chain: Valine--tRNA ligase (862 aa).

Residues 43 to 53 carry the 'HIGH' region motif; it reads PNVTGSLHMGH. Positions 176, 179, 344, 347, 417, 420, 438, and 441 each coordinate Zn(2+). Positions 528-532 match the 'KMSKS' region motif; the sequence is KMSKS. Lys531 contributes to the ATP binding site. A coiled-coil region spans residues 802–862; it reads RRRQEKRLKE…RIREALSQIG (61 aa).

It belongs to the class-I aminoacyl-tRNA synthetase family. ValS type 1 subfamily. As to quaternary structure, monomer. It depends on Zn(2+) as a cofactor.

It localises to the cytoplasm. It catalyses the reaction tRNA(Val) + L-valine + ATP = L-valyl-tRNA(Val) + AMP + diphosphate. Functionally, catalyzes the attachment of valine to tRNA(Val). As ValRS can inadvertently accommodate and process structurally similar amino acids such as threonine, to avoid such errors, it has a 'posttransfer' editing activity that hydrolyzes mischarged Thr-tRNA(Val) in a tRNA-dependent manner. The polypeptide is Valine--tRNA ligase (Thermus thermophilus (strain ATCC BAA-163 / DSM 7039 / HB27)).